Consider the following 703-residue polypeptide: DNA ligase (703 aa).

Residues methionine 1–alanine 20 form a disordered region. Residues serine 9 to alanine 20 are compositionally biased toward low complexity. NAD(+) is bound by residues aspartate 53–aspartate 57, serine 102–isoleucine 103, and glutamate 139. Residue lysine 141 is the N6-AMP-lysine intermediate of the active site. Residues arginine 162, glutamate 200, lysine 321, and lysine 345 each coordinate NAD(+). Zn(2+) contacts are provided by cysteine 439, cysteine 442, cysteine 457, and cysteine 463. The BRCT domain maps to glutamine 622–arginine 703.

Belongs to the NAD-dependent DNA ligase family. LigA subfamily. Mg(2+) serves as cofactor. Requires Mn(2+) as cofactor.

The catalysed reaction is NAD(+) + (deoxyribonucleotide)n-3'-hydroxyl + 5'-phospho-(deoxyribonucleotide)m = (deoxyribonucleotide)n+m + AMP + beta-nicotinamide D-nucleotide.. In terms of biological role, DNA ligase that catalyzes the formation of phosphodiester linkages between 5'-phosphoryl and 3'-hydroxyl groups in double-stranded DNA using NAD as a coenzyme and as the energy source for the reaction. It is essential for DNA replication and repair of damaged DNA. The protein is DNA ligase of Delftia acidovorans (strain DSM 14801 / SPH-1).